The sequence spans 122 residues: UPF0344 protein BcerKBAB4_1054 (122 aa).

Helical transmembrane passes span 6-26 (ITAW…YSAG), 38-58 (LMYI…VKTA), 65-85 (WYGM…MVLV), and 92-112 (PTGA…YLGL).

It belongs to the UPF0344 family.

It localises to the cell membrane. The polypeptide is UPF0344 protein BcerKBAB4_1054 (Bacillus mycoides (strain KBAB4) (Bacillus weihenstephanensis)).